The sequence spans 436 residues: Antilisterial bacteriocin subtilosin biosynthesis protein AlbD (436 aa).

Transmembrane regions (helical) follow at residues 27 to 47 (IAAG…QAGI), 55 to 75 (TYII…SVTS), 113 to 133 (LFFF…GAQT), 134 to 154 (LFWL…GVVL), 164 to 184 (LMFL…ALMP), 187 to 207 (TIPL…PVFL), 240 to 260 (AMLL…FQMM), 270 to 290 (IYIV…LYSI), 315 to 335 (FYSG…GFIS), and 395 to 415 (AILA…LVIV).

The protein resides in the cell membrane. Its function is as follows. Involved in the production of the bacteriocin subtilosin. Required for immunity to subtilosin. The protein is Antilisterial bacteriocin subtilosin biosynthesis protein AlbD (albD) of Bacillus subtilis (strain 168).